A 1251-amino-acid chain; its full sequence is ATP-dependent helicase/nuclease subunit A (1251 aa).

The 477-residue stretch at 5–481 (TKWTDEQWEA…IILSRNFRSR (477 aa)) folds into the UvrD-like helicase ATP-binding domain. An ATP-binding site is contributed by 26–33 (AAAGAGKT). A UvrD-like helicase C-terminal domain is found at 526 to 824 (TVGGEVEFHL…RIMSIHKSKG (299 aa)). Positions 544–565 (NFTFENEGEEGRQADEGEEDEE) are disordered.

Belongs to the helicase family. AddA subfamily. As to quaternary structure, heterodimer of AddA and AddB/RexB. Mg(2+) serves as cofactor.

The enzyme catalyses Couples ATP hydrolysis with the unwinding of duplex DNA by translocating in the 3'-5' direction.. The catalysed reaction is ATP + H2O = ADP + phosphate + H(+). In terms of biological role, the heterodimer acts as both an ATP-dependent DNA helicase and an ATP-dependent, dual-direction single-stranded exonuclease. Recognizes the chi site generating a DNA molecule suitable for the initiation of homologous recombination. The AddA nuclease domain is required for chi fragment generation; this subunit has the helicase and 3' -&gt; 5' nuclease activities. This is ATP-dependent helicase/nuclease subunit A from Acetivibrio thermocellus (strain ATCC 27405 / DSM 1237 / JCM 9322 / NBRC 103400 / NCIMB 10682 / NRRL B-4536 / VPI 7372) (Clostridium thermocellum).